Reading from the N-terminus, the 240-residue chain is 7-cyano-7-deazaguanine synthase (240 aa).

9–19 contributes to the ATP binding site; the sequence is FSGGLDSTACL. Residues cysteine 195, cysteine 210, cysteine 213, and cysteine 216 each coordinate Zn(2+).

It belongs to the QueC family. Zn(2+) is required as a cofactor.

The enzyme catalyses 7-carboxy-7-deazaguanine + NH4(+) + ATP = 7-cyano-7-deazaguanine + ADP + phosphate + H2O + H(+). It participates in purine metabolism; 7-cyano-7-deazaguanine biosynthesis. Catalyzes the ATP-dependent conversion of 7-carboxy-7-deazaguanine (CDG) to 7-cyano-7-deazaguanine (preQ(0)). In Pyrococcus furiosus (strain ATCC 43587 / DSM 3638 / JCM 8422 / Vc1), this protein is 7-cyano-7-deazaguanine synthase.